The sequence spans 170 residues: Putative pre-16S rRNA nuclease (170 aa).

The segment at 1 to 25 (MVPAQHRPPDRPGDPAHDPGRGRRL) is disordered. Residues 7 to 21 (RPPDRPGDPAHDPGR) show a composition bias toward basic and acidic residues.

Belongs to the YqgF nuclease family.

The protein localises to the cytoplasm. Functionally, could be a nuclease involved in processing of the 5'-end of pre-16S rRNA. The protein is Putative pre-16S rRNA nuclease of Mycobacterium tuberculosis (strain ATCC 25177 / H37Ra).